Consider the following 418-residue polypeptide: Serine hydroxymethyltransferase (418 aa).

(6S)-5,6,7,8-tetrahydrofolate is bound by residues Leu121 and 125–127 (GHL). The residue at position 230 (Lys230) is an N6-(pyridoxal phosphate)lysine. 356 to 358 (SPF) is a (6S)-5,6,7,8-tetrahydrofolate binding site.

This sequence belongs to the SHMT family. Homodimer. The cofactor is pyridoxal 5'-phosphate.

It is found in the cytoplasm. The catalysed reaction is (6R)-5,10-methylene-5,6,7,8-tetrahydrofolate + glycine + H2O = (6S)-5,6,7,8-tetrahydrofolate + L-serine. The protein operates within one-carbon metabolism; tetrahydrofolate interconversion. It functions in the pathway amino-acid biosynthesis; glycine biosynthesis; glycine from L-serine: step 1/1. Catalyzes the reversible interconversion of serine and glycine with tetrahydrofolate (THF) serving as the one-carbon carrier. This reaction serves as the major source of one-carbon groups required for the biosynthesis of purines, thymidylate, methionine, and other important biomolecules. Also exhibits THF-independent aldolase activity toward beta-hydroxyamino acids, producing glycine and aldehydes, via a retro-aldol mechanism. The protein is Serine hydroxymethyltransferase of Shewanella sediminis (strain HAW-EB3).